We begin with the raw amino-acid sequence, 342 residues long: Phosphate acyltransferase (342 aa).

It belongs to the PlsX family. In terms of assembly, homodimer. Probably interacts with PlsY.

The protein resides in the cytoplasm. The catalysed reaction is a fatty acyl-[ACP] + phosphate = an acyl phosphate + holo-[ACP]. The protein operates within lipid metabolism; phospholipid metabolism. Catalyzes the reversible formation of acyl-phosphate (acyl-PO(4)) from acyl-[acyl-carrier-protein] (acyl-ACP). This enzyme utilizes acyl-ACP as fatty acyl donor, but not acyl-CoA. The sequence is that of Phosphate acyltransferase from Shewanella halifaxensis (strain HAW-EB4).